Consider the following 198-residue polypeptide: FMN-dependent NADH:quinone oxidoreductase (198 aa).

92–95 is an FMN binding site; sequence MWNL.

Belongs to the azoreductase type 1 family. In terms of assembly, homodimer. It depends on FMN as a cofactor.

It carries out the reaction 2 a quinone + NADH + H(+) = 2 a 1,4-benzosemiquinone + NAD(+). It catalyses the reaction N,N-dimethyl-1,4-phenylenediamine + anthranilate + 2 NAD(+) = 2-(4-dimethylaminophenyl)diazenylbenzoate + 2 NADH + 2 H(+). Its function is as follows. Quinone reductase that provides resistance to thiol-specific stress caused by electrophilic quinones. In terms of biological role, also exhibits azoreductase activity. Catalyzes the reductive cleavage of the azo bond in aromatic azo compounds to the corresponding amines. In Clostridium beijerinckii (strain ATCC 51743 / NCIMB 8052) (Clostridium acetobutylicum), this protein is FMN-dependent NADH:quinone oxidoreductase.